The sequence spans 256 residues: Nickel import ATP-binding protein NikD (256 aa).

In terms of domain architecture, ABC transporter spans 6-245 (LEIRGLRIET…PASATARTLL (240 aa)). ATP is bound at residue 38–45 (GASGSGKS).

It belongs to the ABC transporter superfamily. Nickel importer (TC 3.A.1.5.3) family. As to quaternary structure, the complex is composed of two ATP-binding proteins (NikD and NikE), two transmembrane proteins (NikB and NikC) and a solute-binding protein (NikA).

The protein localises to the cell inner membrane. It carries out the reaction Ni(2+)(out) + ATP + H2O = Ni(2+)(in) + ADP + phosphate + H(+). Functionally, part of the ABC transporter complex NikABCDE involved in nickel import. Responsible for energy coupling to the transport system. In Pseudomonas putida (strain ATCC 47054 / DSM 6125 / CFBP 8728 / NCIMB 11950 / KT2440), this protein is Nickel import ATP-binding protein NikD.